The chain runs to 311 residues: Aspartate carbamoyltransferase catalytic subunit (311 aa).

Carbamoyl phosphate is bound by residues arginine 55 and threonine 56. L-aspartate is bound at residue lysine 85. 3 residues coordinate carbamoyl phosphate: arginine 106, histidine 135, and glutamine 138. L-aspartate is bound by residues arginine 168 and arginine 230. 2 residues coordinate carbamoyl phosphate: leucine 268 and proline 269.

The protein belongs to the aspartate/ornithine carbamoyltransferase superfamily. ATCase family. As to quaternary structure, heterododecamer (2C3:3R2) of six catalytic PyrB chains organized as two trimers (C3), and six regulatory PyrI chains organized as three dimers (R2).

It catalyses the reaction carbamoyl phosphate + L-aspartate = N-carbamoyl-L-aspartate + phosphate + H(+). Its pathway is pyrimidine metabolism; UMP biosynthesis via de novo pathway; (S)-dihydroorotate from bicarbonate: step 2/3. Its function is as follows. Catalyzes the condensation of carbamoyl phosphate and aspartate to form carbamoyl aspartate and inorganic phosphate, the committed step in the de novo pyrimidine nucleotide biosynthesis pathway. This chain is Aspartate carbamoyltransferase catalytic subunit, found in Proteus mirabilis (strain HI4320).